The following is a 199-amino-acid chain: Cell division protein SepF (199 aa).

Positions 15–79 (TEDGDETEVQ…PQPQQKSSTE (65 aa)) are disordered.

This sequence belongs to the SepF family. As to quaternary structure, homodimer. Interacts with FtsZ.

The protein resides in the cytoplasm. Functionally, cell division protein that is part of the divisome complex and is recruited early to the Z-ring. Probably stimulates Z-ring formation, perhaps through the cross-linking of FtsZ protofilaments. Its function overlaps with FtsA. The chain is Cell division protein SepF from Streptococcus sanguinis (strain SK36).